The primary structure comprises 226 residues: ATP synthase F(0) complex subunit a (226 aa).

A run of 6 helical transmembrane segments spans residues 5-25 (LFASFIAPTILGLPAAVLIIL), 68-88 (WSLMLMWLIIFIATTNLLGLL), 97-117 (QLSMNLAMAIPLWAGAVTTGF), 138-158 (IPMLVIIETISLFIQPMALAV), 160-180 (LTANITAGHLLMHLIGSATLA), and 189-209 (TLIIFTVLILLTMLEIAVALI).

The protein belongs to the ATPase A chain family. Component of the ATP synthase complex composed at least of ATP5F1A/subunit alpha, ATP5F1B/subunit beta, ATP5MC1/subunit c (homooctomer), MT-ATP6/subunit a, MT-ATP8/subunit 8, ATP5ME/subunit e, ATP5MF/subunit f, ATP5MG/subunit g, ATP5MK/subunit k, ATP5MJ/subunit j, ATP5F1C/subunit gamma, ATP5F1D/subunit delta, ATP5F1E/subunit epsilon, ATP5PF/subunit F6, ATP5PB/subunit b, ATP5PD/subunit d, ATP5PO/subunit OSCP. ATP synthase complex consists of a soluble F(1) head domain (subunits alpha(3) and beta(3)) - the catalytic core - and a membrane F(0) domain - the membrane proton channel (subunits c, a, 8, e, f, g, k and j). These two domains are linked by a central stalk (subunits gamma, delta, and epsilon) rotating inside the F1 region and a stationary peripheral stalk (subunits F6, b, d, and OSCP). Interacts with DNAJC30; interaction is direct.

Its subcellular location is the mitochondrion inner membrane. It catalyses the reaction H(+)(in) = H(+)(out). Functionally, subunit a, of the mitochondrial membrane ATP synthase complex (F(1)F(0) ATP synthase or Complex V) that produces ATP from ADP in the presence of a proton gradient across the membrane which is generated by electron transport complexes of the respiratory chain. ATP synthase complex consist of a soluble F(1) head domain - the catalytic core - and a membrane F(1) domain - the membrane proton channel. These two domains are linked by a central stalk rotating inside the F(1) region and a stationary peripheral stalk. During catalysis, ATP synthesis in the catalytic domain of F(1) is coupled via a rotary mechanism of the central stalk subunits to proton translocation. With the subunit c (ATP5MC1), forms the proton-conducting channel in the F(0) domain, that contains two crucial half-channels (inlet and outlet) that facilitate proton movement from the mitochondrial intermembrane space (IMS) into the matrix. Protons are taken up via the inlet half-channel and released through the outlet half-channel, following a Grotthuss mechanism. The sequence is that of ATP synthase F(0) complex subunit a from Gorilla gorilla gorilla (Western lowland gorilla).